Here is a 714-residue protein sequence, read N- to C-terminus: Polyribonucleotide nucleotidyltransferase (714 aa).

Residues Asp-488 and Asp-494 each contribute to the Mg(2+) site. Residues 555-614 (PRIEVMNIPVDKIREVIGSGGKVIREIVEKTGAKINIDDDGTVKIASASGKEIEAARKWI) enclose the KH domain. In terms of domain architecture, S1 motif spans 624 to 692 (GQVYEGTVVK…ERGKVRLSMK (69 aa)).

It belongs to the polyribonucleotide nucleotidyltransferase family. Mg(2+) is required as a cofactor.

It is found in the cytoplasm. It catalyses the reaction RNA(n+1) + phosphate = RNA(n) + a ribonucleoside 5'-diphosphate. In terms of biological role, involved in mRNA degradation. Catalyzes the phosphorolysis of single-stranded polyribonucleotides processively in the 3'- to 5'-direction. In Sinorhizobium medicae (strain WSM419) (Ensifer medicae), this protein is Polyribonucleotide nucleotidyltransferase.